Here is a 314-residue protein sequence, read N- to C-terminus: Ribosomal RNA small subunit methyltransferase H (314 aa).

Residues 36–38 (GGH), D56, F80, D102, and Q109 contribute to the S-adenosyl-L-methionine site.

Belongs to the methyltransferase superfamily. RsmH family.

It is found in the cytoplasm. The enzyme catalyses cytidine(1402) in 16S rRNA + S-adenosyl-L-methionine = N(4)-methylcytidine(1402) in 16S rRNA + S-adenosyl-L-homocysteine + H(+). Specifically methylates the N4 position of cytidine in position 1402 (C1402) of 16S rRNA. In Citrobacter koseri (strain ATCC BAA-895 / CDC 4225-83 / SGSC4696), this protein is Ribosomal RNA small subunit methyltransferase H.